Consider the following 104-residue polypeptide: Transcription elongation factor A protein-like 9 (104 aa).

A disordered region spans residues 1-48 (MKPCQKMEGNLEKEDEPKPEEEPKPEEKPEEGQEPEEEEKSEETFRER). The span at 9–31 (GNLEKEDEPKPEEEPKPEEKPEE) shows a compositional bias: basic and acidic residues. Residues 32–41 (GQEPEEEEKS) are compositionally biased toward acidic residues.

This sequence belongs to the TFS-II family. TFA subfamily.

The protein resides in the nucleus. In terms of biological role, may be involved in transcriptional regulation. The polypeptide is Transcription elongation factor A protein-like 9 (Tceal9) (Mus musculus (Mouse)).